A 412-amino-acid chain; its full sequence is L-threonine:uridine-5'-aldehyde transaldolase (412 aa).

Lys229 is modified (N6-(pyridoxal phosphate)lysine).

This sequence belongs to the SHMT family. It depends on pyridoxal 5'-phosphate as a cofactor.

It catalyses the reaction uridine-5'-aldehyde + L-threonine = (5'S,6'S)-C-glycyluridine + acetaldehyde. It functions in the pathway antibiotic biosynthesis. Functionally, transaldolase involved in the biosynthesis of the capuramycin-type nucleoside antibiotic A-503083. Catalyzes the condensation of L-threonine and uridine-5'-aldehyde to form 5'-C-glycyluridine (GlyU). Forms (5'S,6'S)-GlyU. This is L-threonine:uridine-5'-aldehyde transaldolase from Streptomyces sp.